The chain runs to 332 residues: Fructose-1,6-bisphosphatase class 1 (332 aa).

Positions 89, 110, 112, and 113 each coordinate Mg(2+). Residues 113 to 116 (DGSS), Asn206, Tyr239, 257 to 259 (YLY), and Lys269 contribute to the substrate site. Glu275 is a Mg(2+) binding site.

It belongs to the FBPase class 1 family. In terms of assembly, homotetramer. The cofactor is Mg(2+).

It is found in the cytoplasm. The enzyme catalyses beta-D-fructose 1,6-bisphosphate + H2O = beta-D-fructose 6-phosphate + phosphate. It functions in the pathway carbohydrate biosynthesis; gluconeogenesis. In Salmonella typhimurium (strain LT2 / SGSC1412 / ATCC 700720), this protein is Fructose-1,6-bisphosphatase class 1.